A 170-amino-acid chain; its full sequence is Peptide deformylase (170 aa).

2 residues coordinate Fe cation: C94 and H136. The active site involves E137. H140 lines the Fe cation pocket.

Belongs to the polypeptide deformylase family. Fe(2+) serves as cofactor.

The enzyme catalyses N-terminal N-formyl-L-methionyl-[peptide] + H2O = N-terminal L-methionyl-[peptide] + formate. In terms of biological role, removes the formyl group from the N-terminal Met of newly synthesized proteins. Requires at least a dipeptide for an efficient rate of reaction. N-terminal L-methionine is a prerequisite for activity but the enzyme has broad specificity at other positions. The chain is Peptide deformylase from Xylella fastidiosa (strain M12).